We begin with the raw amino-acid sequence, 760 residues long: Sphingosine kinase B (760 aa).

The interval 1-108 (MENNNNEPAE…NNNNNEPVTS (108 aa)) is disordered. Residues 12-39 (VQEKGPKLKNDIDLNDQFKDEKEKKEEI) show a composition bias toward basic and acidic residues. A compositionally biased stretch (low complexity) spans 40–106 (SSSSIENKNN…NNNNNNNEPV (67 aa)). Residues 247 to 383 (PKNRKIRILI…LDVCIVQQPT (137 aa)) enclose the DAGKc domain. ATP is bound by residues 257–259 (NPK) and Thr-288. Residue 313–316 (SGDG) participates in substrate binding. Asp-315 (proton donor/acceptor) is an active-site residue. Residues Glu-320 and 345–347 (GTG) contribute to the ATP site. Residues 394–438 (TVTTTTTTTSPTSASPTITSANNNNNNNNNNNNNNNNNNNNNNNN) are disordered. Asp-461 is a substrate binding site. ATP-binding residues include Arg-468 and Arg-474. Residues 535 to 605 (DNDNNNKNKN…SSPRSDINMS (71 aa)) are disordered. Low complexity predominate over residues 549 to 597 (EINSTTSNNNNNNNTTTTSTSSSTSTSTSTSSLTATTTTAKSTNSLSSS). 734-736 (DGE) lines the ATP pocket.

The catalysed reaction is a sphingoid base + ATP = a sphingoid 1-phosphate + ADP + H(+). Its activity is regulated as follows. Inhibited by N,N,-dimethylsphingosine. Its function is as follows. Catalyzes the phosphorylation of sphingosine to form sphingosine-1-phosphate (S1P), which probably acts intracellularly as a second messenger perhaps by promoting cell proliferation. The sequence is that of Sphingosine kinase B (sgkB) from Dictyostelium discoideum (Social amoeba).